The chain runs to 428 residues: Dihydroorotase (428 aa).

The Zn(2+) site is built by His59 and His61. Substrate-binding positions include 61 to 63 (HLR) and Asn93. Zn(2+)-binding residues include Asp151, His178, and His231. Substrate is bound at residue Asn277. Asp304 is a Zn(2+) binding site. Asp304 is an active-site residue. Substrate is bound by residues His308 and 322–323 (FG).

Belongs to the metallo-dependent hydrolases superfamily. DHOase family. Class I DHOase subfamily. It depends on Zn(2+) as a cofactor.

It carries out the reaction (S)-dihydroorotate + H2O = N-carbamoyl-L-aspartate + H(+). It participates in pyrimidine metabolism; UMP biosynthesis via de novo pathway; (S)-dihydroorotate from bicarbonate: step 3/3. Functionally, catalyzes the reversible cyclization of carbamoyl aspartate to dihydroorotate. The protein is Dihydroorotase of Bacillus cereus (strain B4264).